A 337-amino-acid polypeptide reads, in one-letter code: Anthranilate phosphoribosyltransferase (337 aa).

Residues Gly-80, 83-84, Thr-88, 90-93, 108-116, and Ser-120 each bind 5-phospho-alpha-D-ribose 1-diphosphate; these read GD, NIST, and KHGNRSVSS. Residue Gly-80 coordinates anthranilate. Ser-92 is a Mg(2+) binding site. An anthranilate-binding site is contributed by Asn-111. Arg-166 lines the anthranilate pocket. The Mg(2+) site is built by Asp-225 and Glu-226.

Belongs to the anthranilate phosphoribosyltransferase family. As to quaternary structure, homodimer. Requires Mg(2+) as cofactor.

It carries out the reaction N-(5-phospho-beta-D-ribosyl)anthranilate + diphosphate = 5-phospho-alpha-D-ribose 1-diphosphate + anthranilate. Its pathway is amino-acid biosynthesis; L-tryptophan biosynthesis; L-tryptophan from chorismate: step 2/5. Functionally, catalyzes the transfer of the phosphoribosyl group of 5-phosphorylribose-1-pyrophosphate (PRPP) to anthranilate to yield N-(5'-phosphoribosyl)-anthranilate (PRA). This is Anthranilate phosphoribosyltransferase from Syntrophobacter fumaroxidans (strain DSM 10017 / MPOB).